Here is a 184-residue protein sequence, read N- to C-terminus: Adenine phosphoribosyltransferase 2 (184 aa).

The protein belongs to the purine/pyrimidine phosphoribosyltransferase family. As to quaternary structure, homodimer.

The protein localises to the cytoplasm. It carries out the reaction AMP + diphosphate = 5-phospho-alpha-D-ribose 1-diphosphate + adenine. It functions in the pathway purine metabolism; AMP biosynthesis via salvage pathway; AMP from adenine: step 1/1. Functionally, catalyzes a salvage reaction resulting in the formation of AMP, that is energically less costly than de novo synthesis. In Rhizobium etli (strain ATCC 51251 / DSM 11541 / JCM 21823 / NBRC 15573 / CFN 42), this protein is Adenine phosphoribosyltransferase 2.